Consider the following 458-residue polypeptide: Selection and upkeep of intraepithelial T-cells protein 3 (458 aa).

The signal sequence occupies residues 1–24 (MGSIQIIFAAYCVVLCVLQMLVLS). Topologically, residues 25–237 (SEQFTITGLE…ESISIVLTGD (213 aa)) are extracellular. The region spanning 26 to 141 (EQFTITGLER…EEHITEVKVT (116 aa)) is the Ig-like V-type domain. Intrachain disulfides connect Cys-49-Cys-123 and Cys-163-Cys-217. The 90-residue stretch at 142 to 231 (ATSSDIKIIM…LLTHQEESIS (90 aa)) folds into the Ig-like C1-type domain. N-linked (GlcNAc...) asparagine glycosylation occurs at Asn-200. Residues 238 to 258 (LFSWKIDWILILSIIACVMIP) form a helical membrane-spanning segment. The Cytoplasmic segment spans residues 259–283 (YSMTSYLQQHLIHGSCSQRSHHWRK). The helical transmembrane segment at 284 to 304 (NAMVCMSSVIAIIGSMLILHL) threads the bilayer. The Extracellular segment spans residues 305 to 324 (KQRVPISDQHFELDTLYLED). The helical transmembrane segment at 325 to 345 (ISVILCVVIVFNLKLNLLTYY) threads the bilayer. Residues 346 to 359 (RLERKYDGCTPGCK) are Cytoplasmic-facing. A helical membrane pass occupies residues 360 to 380 (ACFYILKIIIIILPFVFTFGC). At 381-414 (YNAIFLKYHQLQKKVSIPDPLYYFYTSWLVNMEM) the chain is on the extracellular side. The chain crosses the membrane as a helical span at residues 415-435 (LGVFLVFFPTFINLIEFSQFI). Residues 436-458 (KTVPKPIWLCQENMREDDAIRHR) are Cytoplasmic-facing.

Belongs to the SKINT family. As to expression, expressed in skin and thymus.

Its subcellular location is the membrane. In terms of biological role, may act by engaging a cell surface molecule on immature T-cells in the embryonic thymus. The sequence is that of Selection and upkeep of intraepithelial T-cells protein 3 (Skint3) from Mus musculus (Mouse).